A 351-amino-acid polypeptide reads, in one-letter code: MKRKVMLTGDRPTGALHLGHYVGSVVNRLKFQEEYETYFIIADLHTLTTKPDLKSINTIPSNVREMVLDYLACGINPDKVSIYLQSAIPELFELHLIFSMIVTVARLQRIPSIKDMSIAAGLKEIPYGLLGYPVLMSADILMTKANLVPVGRDNESHIEFARELARRFNHLYKNNFFPIPESVFTDSRPLVGIYGKNKMSKSLDNAIFLNDDENLLEKKIMSMYTDPNRIRADIPGNVEGNPIFIYHSFFNSNHEEVEDLKSRYKKGKVGDVEVKKKLFLALNSFLKPIRDKRSFYEAKKKDYIDEIIFDGTSKARFIANKVVKDVKDLIGLSKTWNGIKYSAEKKLKNEE.

ATP is bound by residues R11–T13 and G19–H20. The 'HIGH' region signature appears at P12–H20. L-tryptophan is bound at residue D139. ATP is bound by residues G151–D153, L190, and K198–S202. The 'KMSKS' region motif lies at K198–S202.

This sequence belongs to the class-I aminoacyl-tRNA synthetase family. As to quaternary structure, homodimer.

It localises to the cytoplasm. The enzyme catalyses tRNA(Trp) + L-tryptophan + ATP = L-tryptophyl-tRNA(Trp) + AMP + diphosphate + H(+). Catalyzes the attachment of tryptophan to tRNA(Trp). This chain is Tryptophan--tRNA ligase, found in Borreliella burgdorferi (strain ATCC 35210 / DSM 4680 / CIP 102532 / B31) (Borrelia burgdorferi).